Here is a 466-residue protein sequence, read N- to C-terminus: Coagulation factor IX (466 aa).

A signal peptide spans 1–25 (MRCLNMIMAEPPGLITICLLGYLLG). Residues 26–46 (ADCTVFLDHEDATKVLSRPKR) constitute a propeptide that is removed on maturation. Residues Tyr-47, Asn-48, Glu-53, Glu-54, Glu-61, Glu-63, Glu-66, Glu-67, Glu-72, Glu-73, and Glu-76 each coordinate Ca(2+). A Gla domain is found at 47-92 (YNSGKLEEFVQGNLERECMEEKCSFEEAREVFENTEKTTEFWKQYV). Glu-53, Glu-54, Glu-61, Glu-63, Glu-66, Glu-67, Glu-72, Glu-73, Glu-76, Glu-79, and Glu-82 each carry 4-carboxyglutamate. Glu-61 contacts Mg(2+). Cys-64 and Cys-69 are joined by a disulfide. Glu-66 lines the Mg(2+) pocket. Glu-72 serves as a coordination point for Mg(2+). Glu-76 is a Mg(2+) binding site. Glu-82 provides a ligand contact to Ca(2+). Glu-82 lines the Mg(2+) pocket. O-linked (GalNAc...) threonine glycosylation occurs at Thr-85. 4 residues coordinate Ca(2+): Glu-86, Asp-93, Gly-94, and Gln-96. 4-carboxyglutamate is present on Glu-86. Glu-86 is a Mg(2+) binding site. In terms of domain architecture, EGF-like 1; calcium-binding spans 93 to 129 (DGDQCESNPCLNGGICKDDINSYECWCQTGFEGKNCE). Disulfide bonds link Cys-97/Cys-108, Cys-102/Cys-117, Cys-119/Cys-128, Cys-134/Cys-145, Cys-141/Cys-155, Cys-157/Cys-170, Cys-178/Cys-340, Cys-257/Cys-273, Cys-387/Cys-401, and Cys-412/Cys-440. The O-linked (Glc...) serine glycan is linked to Ser-99. Positions 110 and 111 each coordinate Ca(2+). Asp-110 is subject to (3R)-3-hydroxyaspartate. Ser-114 carries the phosphoserine modification. The 42-residue stretch at 130–171 (LDVTCNIKNGRCKQFCKLDADNKVVCSCTTGYQLAEDQKSCE) folds into the EGF-like 2 domain. A propeptide spans 193 to 231 (AETLFLNMDYENSTTDYENSAEAEKNVDNVTQPLNDLTR) (activation peptide). Tyr-202 is subject to Sulfotyrosine. The residue at position 205 (Ser-205) is a Phosphoserine. The residue at position 206 (Thr-206) is a Phosphothreonine; alternate. A glycan (O-linked (GalNAc...) threonine; alternate) is linked at Thr-206. Asn-221 carries N-linked (GlcNAc...) asparagine glycosylation. O-linked (GalNAc...) threonine glycosylation is found at Thr-223 and Thr-230. The 233-residue stretch at 232 to 464 (IVGGKTAKPG…YVNWIKEKTK (233 aa)) folds into the Peptidase S1 domain. Catalysis depends on His-272, which acts as the Charge relay system. Positions 286, 288, 291, 293, and 296 each coordinate Ca(2+). Asp-320 acts as the Charge relay system in catalysis. Ser-416 functions as the Charge relay system in the catalytic mechanism.

This sequence belongs to the peptidase S1 family. Heterodimer of a light chain and a heavy chain; disulfide-linked. Interacts (inactive and activated) with F11 (activated) in calcium-dependent manner. Interacts with SERPINC1. In terms of processing, the iron and 2-oxoglutarate dependent 3-hydroxylation of aspartate and asparagine is (R) stereospecific within EGF domains. Post-translationally, activated by factor XIa, which excises the activation peptide. The propeptide can also be removed by snake venom protease. Activated by coagulation factor VIIa-tissue factor (F7-F3) complex in calcium-dependent manner. Predominantly O-glucosylated at Ser-99 by POGLUT1 in vitro.

The protein localises to the secreted. It catalyses the reaction Selective cleavage of Arg-|-Ile bond in factor X to form factor Xa.. In terms of biological role, factor IX is a vitamin K-dependent plasma protein that participates in the intrinsic pathway of blood coagulation by converting factor X to its active form in the presence of Ca(2+) ions, phospholipids, and factor VIIIa. This chain is Coagulation factor IX (F9), found in Felis catus (Cat).